Consider the following 106-residue polypeptide: MTSATQFDNVSVVKRANVYFDGKCVSHTVLFPDGTRKTLGVILPCALNFGTDAAELMEVQAGKCRVKLDGSSEWQTYGAGESFSVPGKSRFDIEVLETLDYVCSYL.

It belongs to the nucleoside phosphorylase PpnP family.

It carries out the reaction a purine D-ribonucleoside + phosphate = a purine nucleobase + alpha-D-ribose 1-phosphate. The catalysed reaction is adenosine + phosphate = alpha-D-ribose 1-phosphate + adenine. It catalyses the reaction cytidine + phosphate = cytosine + alpha-D-ribose 1-phosphate. The enzyme catalyses guanosine + phosphate = alpha-D-ribose 1-phosphate + guanine. It carries out the reaction inosine + phosphate = alpha-D-ribose 1-phosphate + hypoxanthine. The catalysed reaction is thymidine + phosphate = 2-deoxy-alpha-D-ribose 1-phosphate + thymine. It catalyses the reaction uridine + phosphate = alpha-D-ribose 1-phosphate + uracil. The enzyme catalyses xanthosine + phosphate = alpha-D-ribose 1-phosphate + xanthine. In terms of biological role, catalyzes the phosphorolysis of diverse nucleosides, yielding D-ribose 1-phosphate and the respective free bases. Can use uridine, adenosine, guanosine, cytidine, thymidine, inosine and xanthosine as substrates. Also catalyzes the reverse reactions. The sequence is that of Pyrimidine/purine nucleoside phosphorylase from Burkholderia ambifaria (strain MC40-6).